The sequence spans 103 residues: Large ribosomal subunit protein bL21 (103 aa).

Belongs to the bacterial ribosomal protein bL21 family. In terms of assembly, part of the 50S ribosomal subunit. Contacts protein L20.

In terms of biological role, this protein binds to 23S rRNA in the presence of protein L20. In Rhodococcus erythropolis (strain PR4 / NBRC 100887), this protein is Large ribosomal subunit protein bL21.